A 111-amino-acid chain; its full sequence is uncharacterized protein (111 aa).

The stretch at 3-29 (RKITSYKTSLQGLREENEDVELMNLNL) forms a coiled coil. Residues 6–111 (TSYKTSLQGL…TWWMYCSSYY (106 aa)) form the PPM-type phosphatase domain.

This is an uncharacterized protein from Acanthamoeba polyphaga mimivirus (APMV).